Here is a 285-residue protein sequence, read N- to C-terminus: tRNA pseudouridine synthase A (285 aa).

The active-site Nucleophile is Asp64. Tyr125 provides a ligand contact to substrate.

The protein belongs to the tRNA pseudouridine synthase TruA family. As to quaternary structure, homodimer.

The catalysed reaction is uridine(38/39/40) in tRNA = pseudouridine(38/39/40) in tRNA. Its function is as follows. Formation of pseudouridine at positions 38, 39 and 40 in the anticodon stem and loop of transfer RNAs. The polypeptide is tRNA pseudouridine synthase A (Streptomyces avermitilis (strain ATCC 31267 / DSM 46492 / JCM 5070 / NBRC 14893 / NCIMB 12804 / NRRL 8165 / MA-4680)).